Consider the following 217-residue polypeptide: Cytidylate kinase (217 aa).

Residue 10–18 (GPAGAGKST) coordinates ATP.

Belongs to the cytidylate kinase family. Type 1 subfamily.

Its subcellular location is the cytoplasm. The catalysed reaction is CMP + ATP = CDP + ADP. The enzyme catalyses dCMP + ATP = dCDP + ADP. The protein is Cytidylate kinase of Clostridium botulinum (strain Okra / Type B1).